The following is a 754-amino-acid chain: MAVNKGYTGYNKELNAMAATHAYIRLSTLMSQIESWQATRASVLTHLGVMLNGVSKLGERSFFSRTKRFGAHTSDGDEIFCDLGGEAVTQILSRLTVALQSARGEGAQTRNAKRGAAPGTSQVENEEQGQTDQTLAISNAVAELMIFVRTKDFTMNECYTQDSFEAKYNLKWEGSSXRDGVSGKLRAQIVEEFQNRLIIADDLGIFPRRDVDGVIIRNEPEVVYSELEDKLLSFESSVYHPKAVTVEFEVPVATGTTTTDDEITTEDVEMVIVTEVLVDDESDYYWLYFVLLLTSFLITCFILLSRRFIHFLGNRGGPGAPLCRRFATRLWSIRLWLLRKATRRYGNLGVVRKTHSQTTMRKYLRDYNFQLEEWETAIGCTPREALIVADQHILVRAVQRIVDSVGDVDSVDAVRKVFNGYKVRNFKIEKWLNKQTVNSALAVLNDSTVPENVVLSEGMLSLQTATFEEVLRCNVESQRESAYFNELIALQFAFRLVGTPEFSDFVLAYKGPAYPCYVEAINRHGTCIIQHHVDEDQKRKNDRAIEWLLMAGQGAFVVSSVVTTGVVVFKIHKWLKQRLLLRALSMLPSVGGGGNGGGGGSLPPQALELFDRAGTFEERLAALQNGLDLSPENMEVFTPEELKTEIRHVVQAYADSSYHVADEPYLRGVGVTVVTGLPEAVGEITTTGSEVSSVDTSISLGVPGRARRRAVSKNTRMYPSTSGQSYNSYKSPRVSGKSGVGSMKMKIASKPMAS.

Disordered regions lie at residues 103 to 131 and 713 to 740; these read RGEG…QGQT and KNTR…KSGV. Residues 713–730 are compositionally biased toward polar residues; the sequence is KNTRMYPSTSGQSYNSYK.

Belongs to the virgaviridae capsid protein family.

Its subcellular location is the virion. Functionally, minor capsid protein involved in virus transmission by the vector. The sequence is that of 84 kDa readthrough protein (CP-CP2) from Soil-borne wheat mosaic virus (strain United States/Nebraska/1981) (SBWMV).